The chain runs to 260 residues: uncharacterized protein (260 aa).

The first 22 residues, 1-22 (MGYIKRIGLYISIFILIVMVAG), serve as a signal peptide directing secretion. A lipid anchor (N-palmitoyl cysteine) is attached at Cys-23. Residue Cys-23 is the site of S-diacylglycerol cysteine attachment.

This sequence belongs to the staphylococcal tandem lipoprotein family.

It is found in the cell membrane. This is an uncharacterized protein from Staphylococcus aureus (strain bovine RF122 / ET3-1).